The sequence spans 600 residues: tRNA(Ile)-lysidine synthase, chloroplastic (600 aa).

35–40 is a binding site for ATP; the sequence is SGGQDS.

This sequence belongs to the tRNA(Ile)-lysidine synthase family.

It is found in the plastid. The protein localises to the chloroplast. It catalyses the reaction cytidine(34) in tRNA(Ile2) + L-lysine + ATP = lysidine(34) in tRNA(Ile2) + AMP + diphosphate + H(+). In terms of biological role, ligates lysine onto the cytidine present at position 34 of the AUA codon-specific tRNA(Ile) that contains the anticodon CAU, in an ATP-dependent manner. Cytidine is converted to lysidine, thus changing the amino acid specificity of the tRNA from methionine to isoleucine. The sequence is that of tRNA(Ile)-lysidine synthase, chloroplastic from Tupiella akineta (Green alga).